Reading from the N-terminus, the 438-residue chain is Enolase (438 aa).

His-159 and Glu-168 together coordinate substrate. Catalysis depends on Glu-211, which acts as the Proton donor. Residues Asp-246, Glu-297, and Asp-322 each coordinate Mg(2+). Positions 297 and 322 each coordinate substrate. Lys-347 functions as the Proton acceptor in the catalytic mechanism. Substrate contacts are provided by residues 374–377 and Lys-398; that span reads SHRS.

Belongs to the enolase family. In terms of assembly, homodimer. The cofactor is Mg(2+).

The protein localises to the cytoplasm. The catalysed reaction is (2R)-2-phosphoglycerate = phosphoenolpyruvate + H2O. The protein operates within carbohydrate degradation; glycolysis; pyruvate from D-glyceraldehyde 3-phosphate: step 4/5. The protein is Enolase (enoA) of Aspergillus fumigatus (strain ATCC MYA-4609 / CBS 101355 / FGSC A1100 / Af293) (Neosartorya fumigata).